The primary structure comprises 888 residues: Kinesin-like protein KIF20A (888 aa).

Ser2 carries the N-acetylserine modification. Phosphoserine is present on residues Ser7, Ser14, and Ser21. Residues 63–506 (KVKVYLRVRP…AKFSAIASQL (444 aa)) form the Kinesin motor domain. 159-166 (GVTNSGKT) is a binding site for ATP. Ser527 is subject to Phosphoserine; by PLK1. A Phosphoserine modification is found at Ser531. Coiled-coil stretches lie at residues 559-587 (KEELLQVVEAMKALLLKERQEKLRLEVQL) and 630-760 (ESLT…ERAC). Phosphoserine occurs at positions 667, 683, and 823. The globular stretch occupies residues 761 to 888 (CHNTGAGKLR…LKSGPFGKKY (128 aa)). The tract at residues 823-863 (STKKRLGANQENQQPNQQPPGKKPFLRNLLPRTPTCQSSTD) is disordered. The residue at position 855 (Thr855) is a Phosphothreonine. A phosphoserine mark is found at Ser865, Ser876, and Ser881.

Belongs to the TRAFAC class myosin-kinesin ATPase superfamily. Kinesin family. Phosphorylated by PLK1 at Ser-527 during mitosis, creating a docking site for PLK1 and recruiting PLK1 at central spindle.

It localises to the golgi apparatus. The protein resides in the cytoplasm. Its subcellular location is the cytoskeleton. The protein localises to the spindle. In terms of biological role, mitotic kinesin required for chromosome passenger complex (CPC)-mediated cytokinesis. Following phosphorylation by PLK1, involved in recruitment of PLK1 to the central spindle. Interacts with guanosine triphosphate (GTP)-bound forms of RAB6A and RAB6B. May act as a motor required for the retrograde RAB6 regulated transport of Golgi membranes and associated vesicles along microtubules. Has a microtubule plus end-directed motility. This Bos taurus (Bovine) protein is Kinesin-like protein KIF20A (KIF20A).